The chain runs to 223 residues: Nicotinamide/nicotinic acid mononucleotide adenylyltransferase 2 (223 aa).

Ser-11 and Phe-12 together coordinate NAD(+). Position 19 (His-19) interacts with ATP. The NAD(+) site is built by Trp-87, Thr-90, Gly-116, Asp-118, Leu-133, Trp-134, and Arg-153. Residue 190–191 (TR) coordinates ATP.

It belongs to the eukaryotic NMN adenylyltransferase family. The cofactor is a divalent metal cation.

It carries out the reaction beta-nicotinamide D-ribonucleotide + ATP + H(+) = diphosphate + NAD(+). The enzyme catalyses nicotinate beta-D-ribonucleotide + ATP + H(+) = deamido-NAD(+) + diphosphate. It participates in cofactor biosynthesis; NAD(+) biosynthesis; deamido-NAD(+) from nicotinate D-ribonucleotide: step 1/1. Its pathway is cofactor biosynthesis; NAD(+) biosynthesis; NAD(+) from nicotinamide D-ribonucleotide: step 1/1. In terms of biological role, catalyzes the formation of NAD(+) from nicotinamide mononucleotide (NMN) and ATP. Can also use the deamidated form; nicotinic acid mononucleotide (NaMN) as substrate. The polypeptide is Nicotinamide/nicotinic acid mononucleotide adenylyltransferase 2 (Caenorhabditis elegans).